We begin with the raw amino-acid sequence, 549 residues long: Oxygen-dependent choline dehydrogenase (549 aa).

D4 to E33 contacts FAD. Residue H465 is the Proton acceptor of the active site.

Belongs to the GMC oxidoreductase family. FAD serves as cofactor.

The enzyme catalyses choline + A = betaine aldehyde + AH2. It carries out the reaction betaine aldehyde + NAD(+) + H2O = glycine betaine + NADH + 2 H(+). It participates in amine and polyamine biosynthesis; betaine biosynthesis via choline pathway; betaine aldehyde from choline (cytochrome c reductase route): step 1/1. Involved in the biosynthesis of the osmoprotectant glycine betaine. Catalyzes the oxidation of choline to betaine aldehyde and betaine aldehyde to glycine betaine at the same rate. The sequence is that of Oxygen-dependent choline dehydrogenase from Rhizobium johnstonii (strain DSM 114642 / LMG 32736 / 3841) (Rhizobium leguminosarum bv. viciae).